The chain runs to 113 residues: UPF0102 protein Ccon26_01140 (113 aa).

This sequence belongs to the UPF0102 family.

This is UPF0102 protein Ccon26_01140 from Campylobacter concisus (strain 13826).